We begin with the raw amino-acid sequence, 466 residues long: Argininosuccinate lyase (466 aa).

The protein belongs to the lyase 1 family. Argininosuccinate lyase subfamily.

The protein localises to the cytoplasm. The catalysed reaction is 2-(N(omega)-L-arginino)succinate = fumarate + L-arginine. The protein operates within amino-acid biosynthesis; L-arginine biosynthesis; L-arginine from L-ornithine and carbamoyl phosphate: step 3/3. This chain is Argininosuccinate lyase, found in Synechococcus elongatus (strain ATCC 33912 / PCC 7942 / FACHB-805) (Anacystis nidulans R2).